The following is a 345-amino-acid chain: Dihydroorotate dehydrogenase (quinone) (345 aa).

FMN is bound by residues 65 to 69 (AGLDK) and Thr-89. Lys-69 serves as a coordination point for substrate. Position 114-118 (114-118 (NRMGF)) interacts with substrate. Positions 142 and 175 each coordinate FMN. Asn-175 contributes to the substrate binding site. The active-site Nucleophile is the Ser-178. Asn-180 contributes to the substrate binding site. FMN contacts are provided by Lys-220 and Thr-248. A substrate-binding site is contributed by 249-250 (NT). FMN-binding positions include Gly-271, Gly-300, and 321–322 (YT).

It belongs to the dihydroorotate dehydrogenase family. Type 2 subfamily. Monomer. FMN serves as cofactor.

Its subcellular location is the cell membrane. The enzyme catalyses (S)-dihydroorotate + a quinone = orotate + a quinol. Its pathway is pyrimidine metabolism; UMP biosynthesis via de novo pathway; orotate from (S)-dihydroorotate (quinone route): step 1/1. In terms of biological role, catalyzes the conversion of dihydroorotate to orotate with quinone as electron acceptor. The polypeptide is Dihydroorotate dehydrogenase (quinone) (Burkholderia lata (strain ATCC 17760 / DSM 23089 / LMG 22485 / NCIMB 9086 / R18194 / 383)).